The following is a 240-amino-acid chain: Homeobox protein notochord (240 aa).

The segment covering Met1–Pro13 has biased composition (polar residues). Disordered stretches follow at residues Met1–Gly21 and Gln208–Ser240. Positions Thr149–Gln208 form a DNA-binding region, homeobox. A compositionally biased stretch (low complexity) spans Pro213–Ser225.

The protein localises to the nucleus. Its function is as follows. Transcription factor that controls node morphogenesis. Acts downstream of both FOXA2 and Brachyury (T) during notochord development. Is essential for cilia formation in the posterior notochord (PNC) and for left-right patterning; acts upstream of FOXJ1 and RFX3 in this process and is required for the expression of various components important for axonemal assembly and function. Plays a role in regulating axial versus paraxial cell fate. Activates the transcription of ciliary proteins C11orf97 homolog, FAM183B and SPACA9 in the embryonic ventral node. This chain is Homeobox protein notochord (Noto), found in Mus musculus (Mouse).